Here is a 597-residue protein sequence, read N- to C-terminus: Kelch-like protein 21 (597 aa).

The region spanning 35-103 (LDVTLEAAGG…SYTGRVAVSG (69 aa)) is the BTB domain. The BACK domain occupies 138–239 (CLDMQDFAEA…RRFYLLAHVE (102 aa)). Kelch repeat units lie at residues 287–335 (ILVL…ALGN), 336–382 (DIYV…VLNG), 384–422 (LYVV…ACRG), 423–470 (RLYA…TLNG), 472–512 (MYFV…ALGG), and 513–560 (KLYV…SIFR). The disordered stretch occupies residues 570-597 (GRGFELNSGSSDVDAGHHRLPQNPEELQ).

In terms of assembly, component of the BCR(KLHL21) E3 ubiquitin ligase complex, at least composed of CUL3, KLHL21 and RBX1.

It is found in the cytoplasm. The protein localises to the cytoskeleton. Its subcellular location is the spindle. Its pathway is protein modification; protein ubiquitination. Substrate-specific adapter of BCR (BTB-CUL3-RBX1) E3 ubiquitin-protein ligase complex required for efficient chromosome alignment and cytokinesis. The BCR(KLHL21) E3 ubiquitin ligase complex regulates localization of the chromosomal passenger complex (CPC) from chromosomes to the spindle midzone in anaphase and mediates the ubiquitination of AURKB. Ubiquitination of AURKB by BCR(KLHL21) E3 ubiquitin ligase complex may not lead to its degradation by the proteasome. The polypeptide is Kelch-like protein 21 (Klhl21) (Rattus norvegicus (Rat)).